Consider the following 116-residue polypeptide: Transmembrane protein 213 (116 aa).

The N-terminal stretch at 1–35 (MAQSGVFLRNPGHLTSAPQAALLFSLVLTSFHLSC) is a signal peptide. Over 36 to 79 (GTETSSSNSTLSAHHPDPGTLEQCANVDFCPLASLCCRASVDEY) the chain is Extracellular. Residues 80 to 100 (GWIAAAVGWSFWFLTLILLCV) form a helical membrane-spanning segment. Residues 101 to 116 (DKLMKLTPEEPKDLAA) lie on the Cytoplasmic side of the membrane.

Its subcellular location is the membrane. In Mus musculus (Mouse), this protein is Transmembrane protein 213 (Tmem213).